Consider the following 314-residue polypeptide: Mycothiol acetyltransferase (314 aa).

2 consecutive N-acetyltransferase domains span residues 18-156 (ATIR…RPLA) and 168-314 (IRIA…MYQL). A 1D-myo-inositol 2-(L-cysteinylamino)-2-deoxy-alpha-D-glucopyranoside-binding site is contributed by glutamate 38. Position 92 to 94 (92 to 94 (VVV)) interacts with acetyl-CoA. Glutamate 195, lysine 234, and glutamate 248 together coordinate 1D-myo-inositol 2-(L-cysteinylamino)-2-deoxy-alpha-D-glucopyranoside. Acetyl-CoA contacts are provided by residues 252 to 254 (VGL) and 259 to 265 (QGHGLGR). Tyrosine 286 provides a ligand contact to 1D-myo-inositol 2-(L-cysteinylamino)-2-deoxy-alpha-D-glucopyranoside.

Belongs to the acetyltransferase family. MshD subfamily. As to quaternary structure, monomer.

It catalyses the reaction 1D-myo-inositol 2-(L-cysteinylamino)-2-deoxy-alpha-D-glucopyranoside + acetyl-CoA = mycothiol + CoA + H(+). Its function is as follows. Catalyzes the transfer of acetyl from acetyl-CoA to desacetylmycothiol (Cys-GlcN-Ins) to form mycothiol. In Catenulispora acidiphila (strain DSM 44928 / JCM 14897 / NBRC 102108 / NRRL B-24433 / ID139908), this protein is Mycothiol acetyltransferase.